The chain runs to 94 residues: Small ribosomal subunit protein bS18 (94 aa).

It belongs to the bacterial ribosomal protein bS18 family. As to quaternary structure, part of the 30S ribosomal subunit. Forms a tight heterodimer with protein bS6.

Functionally, binds as a heterodimer with protein bS6 to the central domain of the 16S rRNA, where it helps stabilize the platform of the 30S subunit. This Acetivibrio thermocellus (strain ATCC 27405 / DSM 1237 / JCM 9322 / NBRC 103400 / NCIMB 10682 / NRRL B-4536 / VPI 7372) (Clostridium thermocellum) protein is Small ribosomal subunit protein bS18.